A 385-amino-acid chain; its full sequence is S-adenosylmethionine synthase (385 aa).

An ATP-binding site is contributed by His-16. Asp-18 lines the Mg(2+) pocket. Glu-44 serves as a coordination point for K(+). L-methionine-binding residues include Glu-57 and Gln-100. The interval 100–110 (QSPDINQGVDR) is flexible loop. Residues 164–166 (DGK), 230–231 (KF), Asp-239, 245–246 (RK), Ala-262, and Lys-266 contribute to the ATP site. Residue Asp-239 coordinates L-methionine. Lys-270 contributes to the L-methionine binding site.

The protein belongs to the AdoMet synthase family. As to quaternary structure, homotetramer; dimer of dimers. Mg(2+) serves as cofactor. K(+) is required as a cofactor.

The protein localises to the cytoplasm. It carries out the reaction L-methionine + ATP + H2O = S-adenosyl-L-methionine + phosphate + diphosphate. It participates in amino-acid biosynthesis; S-adenosyl-L-methionine biosynthesis; S-adenosyl-L-methionine from L-methionine: step 1/1. Functionally, catalyzes the formation of S-adenosylmethionine (AdoMet) from methionine and ATP. The overall synthetic reaction is composed of two sequential steps, AdoMet formation and the subsequent tripolyphosphate hydrolysis which occurs prior to release of AdoMet from the enzyme. The protein is S-adenosylmethionine synthase of Helicobacter pylori (strain HPAG1).